Consider the following 250-residue polypeptide: 1-(5-phosphoribosyl)-5-[(5-phosphoribosylamino)methylideneamino] imidazole-4-carboxamide isomerase (250 aa).

Residue Asp12 is the Proton acceptor of the active site. Catalysis depends on Asp134, which acts as the Proton donor.

The protein belongs to the HisA/HisF family.

Its subcellular location is the cytoplasm. The catalysed reaction is 1-(5-phospho-beta-D-ribosyl)-5-[(5-phospho-beta-D-ribosylamino)methylideneamino]imidazole-4-carboxamide = 5-[(5-phospho-1-deoxy-D-ribulos-1-ylimino)methylamino]-1-(5-phospho-beta-D-ribosyl)imidazole-4-carboxamide. Its pathway is amino-acid biosynthesis; L-histidine biosynthesis; L-histidine from 5-phospho-alpha-D-ribose 1-diphosphate: step 4/9. The polypeptide is 1-(5-phosphoribosyl)-5-[(5-phosphoribosylamino)methylideneamino] imidazole-4-carboxamide isomerase (Actinobacillus pleuropneumoniae serotype 5b (strain L20)).